Consider the following 333-residue polypeptide: Fructose-1,6-bisphosphatase class 1 (333 aa).

Glu92, Asp114, Leu116, and Asp117 together coordinate Mg(2+). Substrate contacts are provided by residues 117 to 120 (DGSS) and Asn209. Glu279 provides a ligand contact to Mg(2+).

Belongs to the FBPase class 1 family. Homotetramer. Mg(2+) serves as cofactor.

The protein resides in the cytoplasm. The enzyme catalyses beta-D-fructose 1,6-bisphosphate + H2O = beta-D-fructose 6-phosphate + phosphate. It functions in the pathway carbohydrate biosynthesis; gluconeogenesis. The polypeptide is Fructose-1,6-bisphosphatase class 1 (Alkalilimnicola ehrlichii (strain ATCC BAA-1101 / DSM 17681 / MLHE-1)).